Reading from the N-terminus, the 293-residue chain is 4-hydroxy-tetrahydrodipicolinate synthase (293 aa).

Residue threonine 47 coordinates pyruvate. Tyrosine 135 acts as the Proton donor/acceptor in catalysis. Catalysis depends on lysine 163, which acts as the Schiff-base intermediate with substrate. A pyruvate-binding site is contributed by isoleucine 204.

Belongs to the DapA family. In terms of assembly, homotetramer; dimer of dimers.

The protein localises to the cytoplasm. It carries out the reaction L-aspartate 4-semialdehyde + pyruvate = (2S,4S)-4-hydroxy-2,3,4,5-tetrahydrodipicolinate + H2O + H(+). The protein operates within amino-acid biosynthesis; L-lysine biosynthesis via DAP pathway; (S)-tetrahydrodipicolinate from L-aspartate: step 3/4. Functionally, catalyzes the condensation of (S)-aspartate-beta-semialdehyde [(S)-ASA] and pyruvate to 4-hydroxy-tetrahydrodipicolinate (HTPA). This Brachyspira hyodysenteriae (strain ATCC 49526 / WA1) protein is 4-hydroxy-tetrahydrodipicolinate synthase.